The following is a 72-amino-acid chain: Large ribosomal subunit protein uL29 (72 aa).

Belongs to the universal ribosomal protein uL29 family.

The chain is Large ribosomal subunit protein uL29 from Chlamydia caviae (strain ATCC VR-813 / DSM 19441 / 03DC25 / GPIC) (Chlamydophila caviae).